A 215-amino-acid chain; its full sequence is UPF0502 protein YceH (215 aa).

Residue Lys-80 is modified to N6-acetyllysine.

The protein belongs to the UPF0502 family.

This Shigella boydii serotype 4 (strain Sb227) protein is UPF0502 protein YceH.